The primary structure comprises 300 residues: GTPase Era (300 aa).

Residues 5–176 form the Era-type G domain; sequence HSGFVCLVGR…IDVLAAALPA (172 aa). The interval 13 to 20 is G1; sequence GRPNTGKS. A GTP-binding site is contributed by 13-20; the sequence is GRPNTGKS. The segment at 39 to 43 is G2; the sequence is QTTRH. Residues 60–63 form a G3 region; sequence DTPG. Residues 60 to 64 and 125 to 128 contribute to the GTP site; these read DTPGL and TKID. A G4 region spans residues 125-128; that stretch reads TKID. The segment at 155–157 is G5; it reads VSA. One can recognise a KH type-2 domain in the interval 207-286; it reads VRDELPHSLA…YLDLRVKVAK (80 aa).

The protein belongs to the TRAFAC class TrmE-Era-EngA-EngB-Septin-like GTPase superfamily. Era GTPase family. Monomer.

The protein resides in the cell envelope. It localises to the secreted. The protein localises to the cell wall. Functionally, exhibits GTPase activity. Binds RNA but is probably not involved in ribosome assembly in mycobacteria. In Mycobacterium bovis (strain ATCC BAA-935 / AF2122/97), this protein is GTPase Era.